The sequence spans 22 residues: Hemocyanin subunit 4 (22 aa).

The protein belongs to the tyrosinase family. Hemocyanin subfamily. As to expression, hemolymph.

It is found in the secreted. The protein localises to the extracellular space. Hemocyanins are copper-containing oxygen carriers occurring freely dissolved in the hemolymph of many mollusks and arthropods. The chain is Hemocyanin subunit 4 from Homarus americanus (American lobster).